The following is a 2324-amino-acid chain: Acetyl-CoA carboxylase (2324 aa).

An N-acetylmethionine modification is found at methionine 1. The disordered stretch occupies residues 1-34 (MEESSQPAKPLEMNPHSRFIIGSVSEDNSEDETS). Serine 78 and serine 80 each carry phosphoserine. In terms of domain architecture, Biotin carboxylation spans 117–618 (VIEKVLIANN…DTGWLDRLIA (502 aa)). One can recognise an ATP-grasp domain in the interval 275 to 466 (QKRILNVPQE…LPAAQLQIAM (192 aa)). 315 to 320 (GGGGKG) contributes to the ATP binding site. Mn(2+) is bound by residues glutamate 424, glutamate 437, and asparagine 439. The active site involves arginine 441. Residues 745-819 (FEKENDPSIL…DPGCVIAKLQ (75 aa)) form the Biotinyl-binding domain. Position 786 is an N6-biotinyllysine (lysine 786). Position 1193 is a phosphoserine (serine 1193). The region spanning 1553-1891 (PYVTKDLLQS…SVYSPVPILK (339 aa)) is the CoA carboxyltransferase N-terminal domain. The carboxyltransferase stretch occupies residues 1553–2211 (PYVTKDLLQS…EDVVKKKIHD (659 aa)). CoA is bound by residues arginine 1800, lysine 2104, and arginine 2106. The 317-residue stretch at 1895–2211 (PIDRTIDFVP…EDVVKKKIHD (317 aa)) folds into the CoA carboxyltransferase C-terminal domain.

The cofactor is biotin. It depends on Mn(2+) as a cofactor.

It localises to the cytoplasm. The catalysed reaction is hydrogencarbonate + acetyl-CoA + ATP = malonyl-CoA + ADP + phosphate + H(+). It catalyses the reaction N(6)-biotinyl-L-lysyl-[protein] + hydrogencarbonate + ATP = N(6)-carboxybiotinyl-L-lysyl-[protein] + ADP + phosphate + H(+). The protein operates within lipid metabolism; malonyl-CoA biosynthesis; malonyl-CoA from acetyl-CoA: step 1/1. Its activity is regulated as follows. By phosphorylation. In terms of biological role, catalyzes the rate-limiting reaction in the biogenesis of long-chain fatty acids. Carries out three functions: biotin carboxyl carrier protein, biotin carboxylase and carboxyltransferase. The protein is Acetyl-CoA carboxylase (ACAC) of Gallus gallus (Chicken).